A 308-amino-acid polypeptide reads, in one-letter code: MKVIFAGTPDFAAAALKAVAAAGFEIPLVLTQPDRPKGRGMQLTAPPVKQAALELGLRVEQPEKLRNNAEALQMLKEVEADVMVVAAYGLILPQEVLDTPKHGCLNIHASLLPRWRGAAPIQRAIEAGDAETGVCIMQMDIGLDTGDVVSEHRYAIQPTDTANEVHDALMEIGAAAVVADLQQLQSKGRLNAVKQPEEGVTYAQKLSKEEARIDWSKSAAVIERKIRAFNPVPAAWVEYQGKPMKIRRAEVVAQQGAAGEVLSCSADGLVVACGENALKITELQPAGGRRMNIAAFAAGRHIEAGTKL.

Ser110 to Pro113 contacts (6S)-5,6,7,8-tetrahydrofolate.

Belongs to the Fmt family.

It catalyses the reaction L-methionyl-tRNA(fMet) + (6R)-10-formyltetrahydrofolate = N-formyl-L-methionyl-tRNA(fMet) + (6S)-5,6,7,8-tetrahydrofolate + H(+). In terms of biological role, attaches a formyl group to the free amino group of methionyl-tRNA(fMet). The formyl group appears to play a dual role in the initiator identity of N-formylmethionyl-tRNA by promoting its recognition by IF2 and preventing the misappropriation of this tRNA by the elongation apparatus. This chain is Methionyl-tRNA formyltransferase, found in Neisseria meningitidis serogroup A / serotype 4A (strain DSM 15465 / Z2491).